The following is a 264-amino-acid chain: MTKTWPPRTVIRKSGGLRGMRTLESALHRGGLGPVAGVDEVGRGACAGPLVVAACVLGPGRIASLAALDDSKKLSEQAREKLFPLICRYAVAYHVVFIPSAEVDRRGVHVANIEGMRRAVAGLAVRPGYVLSDGFRVPGLPMPSLPVIGGDAAAACIAAASVLAKVSRDRVMVALDADHPGYGFAEHKGYSTPAHSRALARLGPCPQHRYSFINVRRVASGSNTAEVADGQPDPRDGTAQTGEGRWSKSSHPATMRATGRAQGT.

An RNase H type-2 domain is found at 33–224; it reads GPVAGVDEVG…VRRVASGSNT (192 aa). Positions 39, 40, and 133 each coordinate a divalent metal cation. The interval 222 to 264 is disordered; it reads SNTAEVADGQPDPRDGTAQTGEGRWSKSSHPATMRATGRAQGT.

The protein belongs to the RNase HII family. The cofactor is Mn(2+). Mg(2+) serves as cofactor.

The protein resides in the cytoplasm. It carries out the reaction Endonucleolytic cleavage to 5'-phosphomonoester.. Functionally, endonuclease that specifically degrades the RNA of RNA-DNA hybrids. This Mycobacterium bovis (strain BCG / Pasteur 1173P2) protein is Ribonuclease HII.